The sequence spans 196 residues: Calcium channel flower (196 aa).

The next 3 helical transmembrane spans lie at 35–55 (LGIV…LSII), 70–92 (LAGF…QVGS), and 113–133 (AVPP…GLIF).

Belongs to the calcium channel flower family. In terms of assembly, homomultimer. Associates with the dally/ magu complex.

The protein resides in the cell membrane. Its subcellular location is the cytoplasmic vesicle. It is found in the secretory vesicle. The protein localises to the synaptic vesicle membrane. It localises to the presynaptic cell membrane. The protein resides in the endosome. With respect to regulation, channel activity is inhibited by La(3+), which reduces Ca(2+) influx and thus inhibits it's function in promoting activity-dependent bulk endocytosis (ADBE) in response to high stimuli. Functionally, transmembrane protein which mediates synaptic endocytosis, fitness-based cell culling, neuronal culling, morphogen gradient scaling, and calcium transport. Regulates synaptic endocytosis and hence couples exo- with endocytosis. Controls two major modes of synaptic vesicle (SV) endocytosis in the synaptic boutons of neuromuscular junctions (NMJs); Ca(2+) channel-independent Clathrin-mediated endocytosis (CME) in response to mild stimulation, and Ca(2+) channel-dependent activity-dependent bulk endocytosis (ADBE) in response to strong stimulation. Functions in ADBE and subsequent SV reformation from bulk endosomes by initiating Ca(2+) channel-dependent phosphatidylinositol 4,5-bisphosphate (PtdIns(4,5)P2) compartmentalization in synaptic boutons. There it acts at the periactive zone to provide the low Ca(2+) levels required to initiate Calcineurin activation and upregulate PtdIns(4,5)P2. Conversely PtdIns(4,5)P2 enhances fwe Ca(2+) channel-activity, establishing a positive feedback loop that induces PtdIns(4,5)P2 microdomain at the periactive zone. These microdomains trigger bulk membrane invagination (i.e. ADBE) by triggering actin polymerization while also promoting localization of fwe to bulk endosomes, thereby removing the ADBE trigger to reduce endocytosis and prevent excess membrane uptake. PtdIns(4,5)P2 then promotes SV reformation from the bulk endosomes, to coordinate ADBE and subsequent SV reformation. Different combinations of the flower isoforms at the cell membrane are also required for the identification and elimination of suboptimal or supernumerary cells during development, regeneration, and adulthood. Required for the recognition and elimination of unfit cells in the developing wing during cell competition. In the developing pupal retina, mediates the elimination of unwanted postmitotic neurons, including supernumerary photoreceptor neurons that form at the periphery of the retina and are contained within incomplete ommatidia units. Also required for efficient elimination and replacement of old neurons by newly generated neurons during regeneration in the adult brain following mechanical injury. Downstream of the flower fitness fingerprints, cells identified as unwanted or unfit are eliminated via apoptosis through the expression of ahuizotl (azot). However, the cells marked for elimination by the flower isoforms only undergo apoptosis if additional thresholds are met; (1) their neighboring fit/healthy cells express different levels of the fwe isoforms, and (2) the levels of the protective signal SPARC expressed by the loser or unwanted cells are unable to inhibit caspase activation. These additional thresholds for flower-mediated apoptosis, allows useful cells to recover from transient and limited stress before they are unnecessarily eliminated. Functions with dally and magu in a mechanism of scaling, which utilises apoptosis to ensure that the dpp morphogen gradient, which mediates organ growth, remains proportional to the size of the growing wing. In this mechanism, fwe represses dally- and Magu-dependent activity in expanding the gradient, and dally/Magu inhibits fwe-dependent apoptosis to keep cell death rate low. When the levels of these different proteins are optimally regulated the gradient correctly scales with organ growth but when this fails, fwe-mediated apoptosis is activated to trim the developing tissue to match the correct size of the gradient. The chain is Calcium channel flower from Drosophila grimshawi (Hawaiian fruit fly).